The sequence spans 278 residues: D-arabinitol 2-dehydrogenase [ribulose-forming] (278 aa).

The NADP(+) site is built by leucine 28 and asparagine 49. Serine 166 functions as the Proton donor in the catalytic mechanism. Positions 181, 185, 214, and 216 each coordinate NADP(+). The Proton acceptor role is filled by tyrosine 181. Lysine 185 (lowers pKa of active site Tyr) is an active-site residue.

This sequence belongs to the short-chain dehydrogenases/reductases (SDR) family.

It catalyses the reaction D-arabinitol + NAD(+) = D-ribulose + NADH + H(+). The protein operates within carbohydrate metabolism; D-arabinitol metabolism. This chain is D-arabinitol 2-dehydrogenase [ribulose-forming] (ARDH), found in Scheffersomyces stipitis (strain ATCC 58785 / CBS 6054 / NBRC 10063 / NRRL Y-11545) (Yeast).